The sequence spans 581 residues: Proline--tRNA ligase (581 aa).

Belongs to the class-II aminoacyl-tRNA synthetase family. ProS type 1 subfamily. Homodimer.

The protein localises to the cytoplasm. The enzyme catalyses tRNA(Pro) + L-proline + ATP = L-prolyl-tRNA(Pro) + AMP + diphosphate. In terms of biological role, catalyzes the attachment of proline to tRNA(Pro) in a two-step reaction: proline is first activated by ATP to form Pro-AMP and then transferred to the acceptor end of tRNA(Pro). As ProRS can inadvertently accommodate and process non-cognate amino acids such as alanine and cysteine, to avoid such errors it has two additional distinct editing activities against alanine. One activity is designated as 'pretransfer' editing and involves the tRNA(Pro)-independent hydrolysis of activated Ala-AMP. The other activity is designated 'posttransfer' editing and involves deacylation of mischarged Ala-tRNA(Pro). The misacylated Cys-tRNA(Pro) is not edited by ProRS. This is Proline--tRNA ligase from Blochmanniella floridana.